The chain runs to 1942 residues: GREB1-like protein (1942 aa).

4 disordered regions span residues 76–101 (SSNS…YLQG), 235–306 (PFSN…GTKT), 325–373 (MDGR…HRSW), and 1123–1256 (TKTA…RTQV). Over residues 81 to 90 (EDMDDEDDSD) the composition is skewed to acidic residues. The segment covering 237-253 (SNSASSSKPSSSSSLSS) has biased composition (low complexity). Polar residues predominate over residues 338–362 (NPLSTPSHGYRTTETGDSPASTAMS). Residues 1127 to 1155 (TSREERPREGERSSGETAEHDDLPMELER) are compositionally biased toward basic and acidic residues. A compositionally biased stretch (low complexity) spans 1158 to 1171 (SNASAATRTSGSTT). Residues 1172–1202 (ENGVSSSSILDKPSSQSDPCGSRTMMDSCSS) are compositionally biased toward polar residues. Residues 1212 to 1248 (SQAPSSSSTSSFSSASSSSSSSSSPAAQRPSQSTQAP) are compositionally biased toward low complexity. A helical transmembrane segment spans residues 1861 to 1881 (GVIFSGLLLYLCDSFVVSSLL).

The protein belongs to the GREB1 family.

It is found in the membrane. Plays a major role in early metanephros development. The chain is GREB1-like protein (greb1l) from Danio rerio (Zebrafish).